A 41-amino-acid polypeptide reads, in one-letter code: Mu-conotoxin pn4c (41 aa).

A propeptide spanning residues 1 to 24 (DQPAERMQDDISSEHHPFFDPVKR) is cleaved from the precursor.

Belongs to the conotoxin M superfamily. Contains 3 disulfide bonds. They are not added, since framework IV presents two different connectivities (I-V, II-III, IV-VI and I-III, II-V, IV-VI). Expressed by the venom duct.

The protein localises to the secreted. In terms of biological role, mu-conotoxins block voltage-gated sodium channels (Nav). Blocks reversibly sodium channels in molluskan neurons, but has no effect on sodium currents in bovine chromaffin cells or in rat brain synaptosomes. Induces paralysis in mollusks (C.retripictus). The sequence is that of Mu-conotoxin pn4c from Conus pennaceus (Feathered cone).